Consider the following 165-residue polypeptide: Methylated-DNA--protein-cysteine methyltransferase, constitutive (165 aa).

The Nucleophile; methyl group acceptor role is filled by cysteine 130.

The protein belongs to the MGMT family.

The protein localises to the cytoplasm. It catalyses the reaction a 6-O-methyl-2'-deoxyguanosine in DNA + L-cysteinyl-[protein] = S-methyl-L-cysteinyl-[protein] + a 2'-deoxyguanosine in DNA. The enzyme catalyses a 4-O-methyl-thymidine in DNA + L-cysteinyl-[protein] = a thymidine in DNA + S-methyl-L-cysteinyl-[protein]. Functionally, involved in the cellular defense against the biological effects of O6-methylguanine (O6-MeG) and O4-methylthymine (O4-MeT) in DNA. Repairs the methylated nucleobase in DNA by stoichiometrically transferring the methyl group to a cysteine residue in the enzyme. This is a suicide reaction: the enzyme is irreversibly inactivated. The polypeptide is Methylated-DNA--protein-cysteine methyltransferase, constitutive (Bacillus subtilis (strain 168)).